Here is a 332-residue protein sequence, read N- to C-terminus: tRNA U34 carboxymethyltransferase (332 aa).

Carboxy-S-adenosyl-L-methionine is bound by residues K91, W105, K110, G130, 152–154, 181–182, M196, Y200, and R315; these read DPS and IE.

This sequence belongs to the class I-like SAM-binding methyltransferase superfamily. CmoB family. Homotetramer.

The enzyme catalyses carboxy-S-adenosyl-L-methionine + 5-hydroxyuridine(34) in tRNA = 5-carboxymethoxyuridine(34) in tRNA + S-adenosyl-L-homocysteine + H(+). Catalyzes carboxymethyl transfer from carboxy-S-adenosyl-L-methionine (Cx-SAM) to 5-hydroxyuridine (ho5U) to form 5-carboxymethoxyuridine (cmo5U) at position 34 in tRNAs. This Shewanella sp. (strain W3-18-1) protein is tRNA U34 carboxymethyltransferase.